Consider the following 147-residue polypeptide: UPF0251 protein NT01CX_1491 (147 aa).

The protein belongs to the UPF0251 family.

In Clostridium novyi (strain NT), this protein is UPF0251 protein NT01CX_1491.